Consider the following 65-residue polypeptide: Large ribosomal subunit protein bL35 (65 aa).

Positions 1–22 (MPKIKTVRGAAKRFKKTGSGGF) are disordered. Residues 10–22 (AAKRFKKTGSGGF) show a composition bias toward basic residues.

The protein belongs to the bacterial ribosomal protein bL35 family.

In Serratia proteamaculans (strain 568), this protein is Large ribosomal subunit protein bL35.